The chain runs to 236 residues: RNA-binding protein 24 (236 aa).

Residues 11 to 88 (TKIFVGGLPY…RKANVNLAYL (78 aa)) form the RRM domain. The necessary for interaction with EIF4E stretch occupies residues 175–199 (QYPYAASPAAAGYVTAGGYGYAVQQ).

As to quaternary structure, interacts with EIF4E; this interaction prevents EIF4E from binding to p53/TP53 mRNA and inhibits the assembly of translation initiation complex. In terms of assembly, (Microbial infection) Interacts with HCV mature core protein; this interaction, which enhances the interaction of Core with 5'-UTR may favor viral replication over translation. (Microbial infection) Interacts with HCV Serine protease/helicase NS3. In terms of tissue distribution, expressed in fetal and adult heart and skeletal muscles.

The protein resides in the nucleus. The protein localises to the cytoplasm. Functionally, multifunctional RNA-binding protein involved in the regulation of pre-mRNA splicing, mRNA stability and mRNA translation important for cell fate decision and differentiation. Plays a major role in pre-mRNA alternative splicing regulation. Mediates preferentially muscle-specific exon inclusion in numerous mRNAs important for striated cardiac and skeletal muscle cell differentiation. Binds to intronic splicing enhancer (ISE) composed of stretches of GU-rich motifs localized in flanking intron of exon that will be included by alternative splicing. Involved in embryonic stem cell (ESC) transition to cardiac cell differentiation by promoting pre-mRNA alternative splicing events of several pluripotency and/or differentiation genes. Plays a role in the regulation of mRNA stability. Binds to 3'-untranslated region (UTR) AU-rich elements in target transcripts, such as CDKN1A and MYOG, leading to maintain their stabilities. Involved in myogenic differentiation by regulating MYOG levels. Binds to multiple regions in the mRNA 3'-UTR of TP63 isoform 2, hence inducing its destabilization. Also promotes the destabilization of the CHRM2 mRNA via its binding to a region in the coding sequence. Plays a role in the regulation of mRNA translation. Mediates repression of p53/TP53 mRNA translation through its binding to U-rich element in the 3'-UTR, hence preventing EIF4E from binding to p53/TP53 mRNA and translation initiation. Binds to a huge amount of mRNAs. Required for embryonic heart development, sarcomer and M-band formation in striated muscles. Together with RBM20, promotes the expression of short isoforms of PDLIM5/ENH in cardiomyocytes. Its function is as follows. (Microbial infection) Promotes hepatitis C virus (HCV) replication over translation through the inhibition of viral protein expression. Decreases viral translation by linking viral 5'- and 3'-UTRs, blocking 80S ribosome assembly on the viral IRES and enhancing the interaction of the mature core protein and 5'-UTR. The polypeptide is RNA-binding protein 24 (Homo sapiens (Human)).